The chain runs to 402 residues: CCA-adding enzyme (402 aa).

ATP contacts are provided by G32 and R35. Residues G32 and R35 each contribute to the CTP site. Residues D45 and D47 each contribute to the Mg(2+) site. ATP-binding residues include R116, D159, R162, R165, and R168. Positions 116, 159, 162, 165, and 168 each coordinate CTP.

The protein belongs to the tRNA nucleotidyltransferase/poly(A) polymerase family. Bacterial CCA-adding enzyme type 3 subfamily. As to quaternary structure, homodimer. The cofactor is Mg(2+).

The enzyme catalyses a tRNA precursor + 2 CTP + ATP = a tRNA with a 3' CCA end + 3 diphosphate. It catalyses the reaction a tRNA with a 3' CCA end + 2 CTP + ATP = a tRNA with a 3' CCACCA end + 3 diphosphate. Its function is as follows. Catalyzes the addition and repair of the essential 3'-terminal CCA sequence in tRNAs without using a nucleic acid template. Adds these three nucleotides in the order of C, C, and A to the tRNA nucleotide-73, using CTP and ATP as substrates and producing inorganic pyrophosphate. tRNA 3'-terminal CCA addition is required both for tRNA processing and repair. Also involved in tRNA surveillance by mediating tandem CCA addition to generate a CCACCA at the 3' terminus of unstable tRNAs. While stable tRNAs receive only 3'-terminal CCA, unstable tRNAs are marked with CCACCA and rapidly degraded. The chain is CCA-adding enzyme from Streptococcus pyogenes serotype M1.